The following is a 413-amino-acid chain: Cardiolipin synthase B (413 aa).

PLD phosphodiesterase domains are found at residues 108 to 135 and 285 to 312; these read IFRR…SAEH and RRRP…DPLS. Catalysis depends on residues histidine 113, lysine 115, aspartate 120, histidine 290, lysine 292, and aspartate 297. The disordered stretch occupies residues 388 to 413; the sequence is AQVPPPAQPEMETQDRVDPENSGVKP.

The protein belongs to the phospholipase D family. Cardiolipin synthase subfamily. ClsB sub-subfamily.

It localises to the cell membrane. It catalyses the reaction 2 a 1,2-diacyl-sn-glycero-3-phospho-(1'-sn-glycerol) = a cardiolipin + glycerol. Functionally, catalyzes the phosphatidyl group transfer from one phosphatidylglycerol molecule to another to form cardiolipin (CL) (diphosphatidylglycerol) and glycerol. The polypeptide is Cardiolipin synthase B (Salmonella typhi).